A 142-amino-acid chain; its full sequence is DNA-directed RNA polymerase subunit omega (142 aa).

The segment at 93–142 (AWSVPEAGGDEGGDASELLDDEGEGAAAGAEPDFSEMDVPLADLADEDKI) is disordered. Residues 100–116 (GGDEGGDASELLDDEGE) show a composition bias toward acidic residues.

It belongs to the RNA polymerase subunit omega family. The RNAP catalytic core consists of 2 alpha, 1 beta, 1 beta' and 1 omega subunit. When a sigma factor is associated with the core the holoenzyme is formed, which can initiate transcription.

It carries out the reaction RNA(n) + a ribonucleoside 5'-triphosphate = RNA(n+1) + diphosphate. Its function is as follows. Promotes RNA polymerase assembly. Latches the N- and C-terminal regions of the beta' subunit thereby facilitating its interaction with the beta and alpha subunits. This is DNA-directed RNA polymerase subunit omega from Rhodospirillum centenum (strain ATCC 51521 / SW).